Reading from the N-terminus, the 388-residue chain is Fetuin-B (388 aa).

Residues 1-18 (MGLLRLLVLCTLAACCMA) form the signal peptide. 2 Cystatin fetuin-B-type domains span residues 28–141 (QRPL…YNCT) and 152–264 (TTCP…VTCE). N-linked (GlcNAc...) asparagine glycosylation occurs at Asn40. 5 disulfides stabilise this stretch: Cys96-Cys107, Cys120-Cys140, Cys154-Cys157, Cys217-Cys224, and Cys237-Cys263. The N-linked (GlcNAc...) asparagine glycan is linked to Asn139. Disordered regions lie at residues 270–343 (AQVP…PQGD) and 367–388 (KEQRSAECPGPEKENNPLVLPP). Residues 279–300 (AVTQGPQKLPQKNTAPTSSPSV) show a composition bias toward polar residues. Residues Thr292 and Thr295 are each glycosylated (O-linked (GalNAc...) threonine). Residue Ser321 is modified to Phosphoserine. Residues 367–381 (KEQRSAECPGPEKEN) show a composition bias toward basic and acidic residues.

Belongs to the fetuin family. In terms of tissue distribution, liver, lung and tongue.

The protein localises to the secreted. Functionally, protease inhibitor required for egg fertilization. Required to prevent premature zona pellucida hardening before fertilization, probably by inhibiting the protease activity of ASTL, a protease that mediates the cleavage of ZP2 and triggers zona pellucida hardening. The polypeptide is Fetuin-B (Fetub) (Mus musculus (Mouse)).